The following is a 369-amino-acid chain: MNEQSQAKSPDTLRAMVAGTLANFQHPTLKHNLTTLKALHHVAWMDDTLHVELVMPFVWNSAFEVLKEQCSADLLRITGAKAIDWKLSYNIATLKRVKNQPGINGVKNIIAVSSGKGGVGKSSTAVNLALALAAEGAKVGVLDADIYGPSIPTMLGAEDQRPTSPDGTHMAPIMSHGLATNSIGYLVTDDNAMVWRGPMASKALMQMLQETLWPDLDYLVLDMPPGTGDIQLTLAQNIPVTGAVVVTTPQDIALIDAKKGIVMFEKVEVPVLGIVENMSMHICSNCGHHEPIFGTGGAQKLAEKYHTQLLGQMPLHISLREDLDRGTPTVVSRPESEFTAIYRELADRVAAQLYWQGEVIPGEIAFRAV.

115–122 (GKGGVGKS) provides a ligand contact to ATP.

It belongs to the Mrp/NBP35 ATP-binding proteins family. Homodimer. Holo-ApbC forms a mixture of homodimers and homotetramers.

Its function is as follows. Binds and transfers iron-sulfur (Fe-S) clusters to target apoproteins. Can hydrolyze ATP. Both activities are required for function in vivo, but the ability to hydrolyze ATP is not necessary for Fe-S cluster transfer. The protein is Iron-sulfur cluster carrier protein of Salmonella typhimurium (strain LT2 / SGSC1412 / ATCC 700720).